A 242-amino-acid chain; its full sequence is 1-(5-phosphoribosyl)-5-[(5-phosphoribosylamino)methylideneamino] imidazole-4-carboxamide isomerase (242 aa).

D8 serves as the catalytic Proton acceptor. The active-site Proton donor is D129.

It belongs to the HisA/HisF family.

The protein localises to the cytoplasm. The enzyme catalyses 1-(5-phospho-beta-D-ribosyl)-5-[(5-phospho-beta-D-ribosylamino)methylideneamino]imidazole-4-carboxamide = 5-[(5-phospho-1-deoxy-D-ribulos-1-ylimino)methylamino]-1-(5-phospho-beta-D-ribosyl)imidazole-4-carboxamide. It functions in the pathway amino-acid biosynthesis; L-histidine biosynthesis; L-histidine from 5-phospho-alpha-D-ribose 1-diphosphate: step 4/9. In Syntrophus aciditrophicus (strain SB), this protein is 1-(5-phosphoribosyl)-5-[(5-phosphoribosylamino)methylideneamino] imidazole-4-carboxamide isomerase.